Here is a 585-residue protein sequence, read N- to C-terminus: Lipoprotein LpqB (585 aa).

An N-terminal signal peptide occupies residues 1 to 17; that stretch reads MGRKLLGLLMLAVLLAG. The N-palmitoyl cysteine moiety is linked to residue Cys18. Cys18 carries the S-diacylglycerol cysteine lipid modification. Disordered stretches follow at residues 24–48 and 560–585; these read SSAP…TPGM and PSAD…VLPG.

The protein belongs to the LpqB lipoprotein family.

It is found in the cell membrane. This is Lipoprotein LpqB from Mycolicibacterium paratuberculosis (strain ATCC BAA-968 / K-10) (Mycobacterium paratuberculosis).